Consider the following 116-residue polypeptide: MKTIIVFLSLLVLATKFGDANEGVNQEQMKEVIQNEFREDFLNEMAAMSLLQQLEAIESTLLEKEADRNSRQKRCNGENVPCGPNHSTCCSGLSCEETFGYGWWYDTPFCVKPSKG.

Positions 1 to 20 are cleaved as a signal peptide; sequence MKTIIVFLSLLVLATKFGDA. A propeptide spanning residues 21–74 is cleaved from the precursor; it reads NEGVNQEQMKEVIQNEFREDFLNEMAAMSLLQQLEAIESTLLEKEADRNSRQKR. Disulfide bonds link cysteine 75/cysteine 90, cysteine 82/cysteine 95, and cysteine 89/cysteine 110. Asparagine 85 carries N-linked (GlcNAc...) asparagine glycosylation.

This sequence belongs to the neurotoxin 14 (magi-1) family. 06 (ICK-Trit) subfamily. In terms of tissue distribution, expressed by the venom gland.

The protein localises to the secreted. Ion channel inhibitor. The polypeptide is U16-barytoxin-Tl1f (Trittame loki (Brush-footed trapdoor spider)).